The sequence spans 283 residues: NAD kinase (283 aa).

The active-site Proton acceptor is the D66. NAD(+) is bound by residues 66 to 67 (DG), 134 to 135 (ND), R145, R163, D165, and 176 to 181 (TAYSMS).

Belongs to the NAD kinase family. The cofactor is a divalent metal cation.

The protein localises to the cytoplasm. It carries out the reaction NAD(+) + ATP = ADP + NADP(+) + H(+). Its function is as follows. Involved in the regulation of the intracellular balance of NAD and NADP, and is a key enzyme in the biosynthesis of NADP. Catalyzes specifically the phosphorylation on 2'-hydroxyl of the adenosine moiety of NAD to yield NADP. In Chlorobaculum tepidum (strain ATCC 49652 / DSM 12025 / NBRC 103806 / TLS) (Chlorobium tepidum), this protein is NAD kinase.